The following is a 428-amino-acid chain: 3-phosphoshikimate 1-carboxyvinyltransferase (428 aa).

Lys22, Ser23, and Arg27 together coordinate 3-phosphoshikimate. Position 22 (Lys22) interacts with phosphoenolpyruvate. Phosphoenolpyruvate is bound by residues Gly96 and Arg124. Residues Ser169, Ser170, Gln171, Ser197, Asp313, Asn336, and Lys340 each coordinate 3-phosphoshikimate. Gln171 serves as a coordination point for phosphoenolpyruvate. Residue Asp313 is the Proton acceptor of the active site. 3 residues coordinate phosphoenolpyruvate: Arg344, Arg386, and Lys411.

It belongs to the EPSP synthase family. Monomer.

Its subcellular location is the cytoplasm. The enzyme catalyses 3-phosphoshikimate + phosphoenolpyruvate = 5-O-(1-carboxyvinyl)-3-phosphoshikimate + phosphate. It participates in metabolic intermediate biosynthesis; chorismate biosynthesis; chorismate from D-erythrose 4-phosphate and phosphoenolpyruvate: step 6/7. Catalyzes the transfer of the enolpyruvyl moiety of phosphoenolpyruvate (PEP) to the 5-hydroxyl of shikimate-3-phosphate (S3P) to produce enolpyruvyl shikimate-3-phosphate and inorganic phosphate. The chain is 3-phosphoshikimate 1-carboxyvinyltransferase from Proteus mirabilis (strain HI4320).